The primary structure comprises 1114 residues: WD repeat-containing protein 72 (1114 aa).

WD repeat units lie at residues 15-54 (APPHSITAIMITDDQQTIVTGSQEGQLCLWSLSPELKISA), 60-102 (GHSA…CVEK), 160-197 (KCMCIVHSVRIQEDSLLVVSITGELKVWDLSSSINSIQ), 327-373 (EENK…SKFD), 413-452 (GMTATITSSEYIPNLDKLICGCEDGTIFITKALNAAKAGL), 470-515 (GHHQ…ILHT), and 566-605 (KHLFPVRMIRWHPVENFLIVGCTDDSVYIWEIETGTLERH). Disordered regions lie at residues 634–658 (SETHKHKSIEQKSSNSHQPGPVPCP) and 749–798 (SLQT…PPRK). Positions 780 to 796 (KRQKKMKSSKKAHPKPP) are enriched in basic residues. Ser-1093 and Ser-1095 each carry phosphoserine.

Expressed in maturation stage ameloblasts (at protein level).

It is found in the cytoplasmic vesicle. In terms of biological role, plays a major role in formation of tooth enamel. Specifically required during the maturation phase of amelogenesis for normal formation of the enamel matrix and clearance of enamel proteins. May be involved in localization of the calcium transporter SLC24A4 to the ameloblast cell membrane. The chain is WD repeat-containing protein 72 from Mus musculus (Mouse).